Consider the following 142-residue polypeptide: Large-conductance mechanosensitive channel (142 aa).

2 helical membrane-spanning segments follow: residues 14 to 34 and 82 to 102; these read VMDLAVGVIIGAAFSKIVDSV and GNFITVFINFLILAWIIFLLI.

It belongs to the MscL family. As to quaternary structure, homopentamer.

The protein localises to the cell inner membrane. Its function is as follows. Channel that opens in response to stretch forces in the membrane lipid bilayer. May participate in the regulation of osmotic pressure changes within the cell. The polypeptide is Large-conductance mechanosensitive channel (Sinorhizobium medicae (strain WSM419) (Ensifer medicae)).